A 236-amino-acid chain; its full sequence is Small ribosomal subunit protein uS2c (236 aa).

The protein belongs to the universal ribosomal protein uS2 family.

The protein localises to the plastid. The protein resides in the chloroplast. The protein is Small ribosomal subunit protein uS2c (rps2) of Saccharum hybrid (Sugarcane).